We begin with the raw amino-acid sequence, 544 residues long: Dihydrolipoyllysine-residue acetyltransferase component of pyruvate dehydrogenase complex (544 aa).

Lipoyl-binding domains lie at 1 to 76 (MYEF…VTID) and 113 to 188 (IYDF…VLIG). Lys-42 and Lys-154 each carry N6-lipoyllysine. One can recognise a Peripheral subunit-binding (PSBD) domain in the interval 242–279 (LASPVARKLASDLGVDIATIKGSGEQGRVMKDDVQNSK). The active site involves His-516.

Belongs to the 2-oxoacid dehydrogenase family. Forms a 24-polypeptide structural core with octahedral symmetry. (R)-lipoate is required as a cofactor.

The enzyme catalyses N(6)-[(R)-dihydrolipoyl]-L-lysyl-[protein] + acetyl-CoA = N(6)-[(R)-S(8)-acetyldihydrolipoyl]-L-lysyl-[protein] + CoA. Functionally, the pyruvate dehydrogenase complex catalyzes the overall conversion of pyruvate to acetyl-CoA and CO(2). It contains multiple copies of three enzymatic components: pyruvate dehydrogenase (E1), dihydrolipoamide acetyltransferase (E2) and lipoamide dehydrogenase (E3). The chain is Dihydrolipoyllysine-residue acetyltransferase component of pyruvate dehydrogenase complex (pdhC) from Acholeplasma laidlawii.